We begin with the raw amino-acid sequence, 416 residues long: Serine hydroxymethyltransferase (416 aa).

(6S)-5,6,7,8-tetrahydrofolate contacts are provided by residues leucine 121 and 125 to 127; that span reads GHL. Lysine 229 is subject to N6-(pyridoxal phosphate)lysine.

It belongs to the SHMT family. In terms of assembly, homodimer. Pyridoxal 5'-phosphate is required as a cofactor.

It is found in the cytoplasm. It carries out the reaction (6R)-5,10-methylene-5,6,7,8-tetrahydrofolate + glycine + H2O = (6S)-5,6,7,8-tetrahydrofolate + L-serine. It functions in the pathway one-carbon metabolism; tetrahydrofolate interconversion. Its pathway is amino-acid biosynthesis; glycine biosynthesis; glycine from L-serine: step 1/1. Functionally, catalyzes the reversible interconversion of serine and glycine with tetrahydrofolate (THF) serving as the one-carbon carrier. This reaction serves as the major source of one-carbon groups required for the biosynthesis of purines, thymidylate, methionine, and other important biomolecules. Also exhibits THF-independent aldolase activity toward beta-hydroxyamino acids, producing glycine and aldehydes, via a retro-aldol mechanism. This Neisseria meningitidis serogroup C / serotype 2a (strain ATCC 700532 / DSM 15464 / FAM18) protein is Serine hydroxymethyltransferase.